Reading from the N-terminus, the 389-residue chain is MAGLQRLASHLPVGVMLPHNTTEAPGPHSAKQDSYEQGDSSQQSLKGHLRNNFQKQLLSNKELTLDKVYTHPKWNTHTKARSYSYPHCTGISQQDPESDSQGQGKGLFYSSGPQSWYPKANNQDFIPFTKKRVGVDRAYPLKPVVHRKSCSTGEAGTDGYHNVYPRPPEPREFSSRNFGVRNQGNFSVVGTVLAAMQAEKAVANFDRTEWVQIRRLEAAGESLEEEIRRKQILLRGKLKKTEEELRRIQMQKEQAKENENRELQKIILPRSRVKGNNSNTMYKPIFSPEFEFEEEFSRDRREDETWGRSQQNSSPFQLSDYRIQRLKRERLVASNNKIQDRVSELSVEKFSLPSETPGGALQGSARNSSLSMAPDSSGSSGSIEEPQLG.

2 disordered regions span residues 16-44 (MLPH…SQQS) and 84-115 (SYPH…GPQS). Composition is skewed to polar residues over residues 35–44 (YEQGDSSQQS) and 90–102 (GISQ…DSQG). Residues 211–266 (VQIRRLEAAGESLEEEIRRKQILLRGKLKKTEEELRRIQMQKEQAKENENRELQKI) adopt a coiled-coil conformation. Disordered regions lie at residues 301–320 (REDE…QLSD) and 343–389 (SELS…PQLG). Positions 307–317 (GRSQQNSSPFQ) are enriched in polar residues. Residues 368-382 (SSLSMAPDSSGSSGS) are compositionally biased toward low complexity.

The protein belongs to the ZC2HC1 family.

The polypeptide is Zinc finger C2HC domain-containing protein 1C homolog (ZC2HC1C) (Pongo abelii (Sumatran orangutan)).